The chain runs to 360 residues: Photosystem II protein D1 (360 aa).

Transmembrane regions (helical) follow at residues 29 to 46 (YIGW…TATC), 118 to 133 (HFLI…EWEL), and 142 to 156 (WICV…AATA). A chlorophyll a-binding site is contributed by His118. Residue Tyr126 participates in pheophytin a binding. [CaMn4O5] cluster-binding residues include Asp170 and Glu189. The chain crosses the membrane as a helical span at residues 197 to 218 (FHMAGVAGVFGGALFSAMHGSL). His198 is a chlorophyll a binding site. A quinone contacts are provided by residues His215 and 264–265 (SF). His215 contributes to the Fe cation binding site. Position 272 (His272) interacts with Fe cation. Residues 274–288 (FLGAWPVVGIWLTAI) traverse the membrane as a helical segment. His332, Glu333, Asp342, and Ala344 together coordinate [CaMn4O5] cluster. The propeptide occupies 345-360 (SNSVVPVALTAPSVEA).

Belongs to the reaction center PufL/M/PsbA/D family. PSII is composed of 1 copy each of membrane proteins PsbA, PsbB, PsbC, PsbD, PsbE, PsbF, PsbH, PsbI, PsbJ, PsbK, PsbL, PsbM, PsbT, PsbX, PsbY, PsbZ, Psb30/Ycf12, at least 3 peripheral proteins of the oxygen-evolving complex and a large number of cofactors. It forms dimeric complexes. The cofactor is The D1/D2 heterodimer binds P680, chlorophylls that are the primary electron donor of PSII, and subsequent electron acceptors. It shares a non-heme iron and each subunit binds pheophytin, quinone, additional chlorophylls, carotenoids and lipids. D1 provides most of the ligands for the Mn4-Ca-O5 cluster of the oxygen-evolving complex (OEC). There is also a Cl(-1) ion associated with D1 and D2, which is required for oxygen evolution. The PSII complex binds additional chlorophylls, carotenoids and specific lipids.. Post-translationally, tyr-161 forms a radical intermediate that is referred to as redox-active TyrZ, YZ or Y-Z. C-terminally processed by CTPA; processing is essential to allow assembly of the oxygen-evolving complex and thus photosynthetic growth.

Its subcellular location is the plastid. It localises to the chloroplast thylakoid membrane. The enzyme catalyses 2 a plastoquinone + 4 hnu + 2 H2O = 2 a plastoquinol + O2. In terms of biological role, photosystem II (PSII) is a light-driven water:plastoquinone oxidoreductase that uses light energy to abstract electrons from H(2)O, generating O(2) and a proton gradient subsequently used for ATP formation. It consists of a core antenna complex that captures photons, and an electron transfer chain that converts photonic excitation into a charge separation. The D1/D2 (PsbA/PsbD) reaction center heterodimer binds P680, the primary electron donor of PSII as well as several subsequent electron acceptors. The sequence is that of Photosystem II protein D1 from Cyanidioschyzon merolae (strain NIES-3377 / 10D) (Unicellular red alga).